A 384-amino-acid polypeptide reads, in one-letter code: S-adenosylmethionine synthase (384 aa).

His15 contacts ATP. Asp17 lines the Mg(2+) pocket. Glu43 lines the K(+) pocket. Positions 56 and 99 each coordinate L-methionine. The tract at residues 99-109 (QSPDINQGVDR) is flexible loop. ATP is bound by residues 164-166 (DAK), 230-231 (RF), Asp239, 245-246 (RK), Ala262, and Lys266. Asp239 serves as a coordination point for L-methionine. An L-methionine-binding site is contributed by Lys270.

The protein belongs to the AdoMet synthase family. Homotetramer; dimer of dimers. It depends on Mg(2+) as a cofactor. K(+) is required as a cofactor.

The protein resides in the cytoplasm. The catalysed reaction is L-methionine + ATP + H2O = S-adenosyl-L-methionine + phosphate + diphosphate. It functions in the pathway amino-acid biosynthesis; S-adenosyl-L-methionine biosynthesis; S-adenosyl-L-methionine from L-methionine: step 1/1. Its function is as follows. Catalyzes the formation of S-adenosylmethionine (AdoMet) from methionine and ATP. The overall synthetic reaction is composed of two sequential steps, AdoMet formation and the subsequent tripolyphosphate hydrolysis which occurs prior to release of AdoMet from the enzyme. This is S-adenosylmethionine synthase from Salmonella choleraesuis (strain SC-B67).